A 99-amino-acid polypeptide reads, in one-letter code: High mobility group nucleosome-binding domain-containing protein 3 (99 aa).

Basic and acidic residues-rich tracts occupy residues 1–25 (MPKR…EPTR) and 39–53 (PESK…KEPG). The interval 1 to 99 (MPKRKSPENT…RTESIEKEGE (99 aa)) is disordered. A Phosphoserine modification is found at S6. The residue at position 10 (T10) is a Phosphothreonine. Phosphoserine is present on residues S78 and S93. Residues 83-99 (TKVEEAQRTESIEKEGE) are compositionally biased toward basic and acidic residues.

The protein belongs to the HMGN family. As to quaternary structure, interacts with the ligand binding domain of the thyroid receptor (TR) (in vitro). Requires the presence of thyroid hormone for its interaction. Interacts with transcriptional regulator SEHBP. Interacts with nucleosomes. As to expression, expressed in the brain, eye, prostate, thyroid, kidney, testis, glial cells and insulin-producing cells of the Langerhans pancreatic islets. In the brain, expressed in the lateral olfactory tract, anterior commissure, corpus callosum, internal capsule, fornix, stria medullans, optic tract, axon bundles, Purkinje cell layer and granular layer of the cerebellum. In retina, expressed in the nuclei of cells in the inner nuclear layer including amacrine, bipolar and horizontal neurons and in the nuclei of ganglion neurons. Detected at low levels in the liver.

It localises to the nucleus. Its function is as follows. Binds to nucleosomes, regulating chromatin structure and consequently, chromatin-dependent processes such as transcription, DNA replication and DNA repair. Affects both insulin and glucagon levels and modulates the expression of pancreatic genes involved in insulin secretion. Regulates the expression of the glucose transporter SLC2A2 by binding specifically to its promoter region and recruiting PDX1 and additional transcription factors. Regulates the expression of SLC6A9, a glycine transporter which regulates the glycine concentration in synaptic junctions in the central nervous system, by binding to its transcription start site. May play a role in ocular development and astrocyte function. This is High mobility group nucleosome-binding domain-containing protein 3 (Hmgn3) from Mus musculus (Mouse).